A 345-amino-acid polypeptide reads, in one-letter code: Calcium uniporter regulatory subunit MCUb, mitochondrial (345 aa).

The transit peptide at methionine 1–leucine 44 directs the protein to the mitochondrion. The stretch at glutamate 188–arginine 221 forms a coiled coil. The next 2 membrane-spanning stretches (helical) occupy residues leucine 229–tryptophan 249 and proline 259–threonine 279. The stretch at phenylalanine 306–leucine 334 forms a coiled coil.

The protein belongs to the MCU (TC 1.A.77) family. Homooligomer. Associates with the uniplex complex, composed of MCU, MICU1, MICU2 and EMRE/SMDT1, inhibiting its activity. In terms of tissue distribution, detected in lung, brain and heart, and at lower levels in white fat, skeletal muscle and spleen. Detected at very low levels in kidney and liver. Highly expressed in macrophages during the progression of skeletal muscle regeneration.

Its subcellular location is the mitochondrion inner membrane. Functionally, negative regulator of the mitochondrial calcium uniporter (MCU), a channel that mediates calcium uptake into the mitochondrial matrix. MCUB is required to limit mitochondrial calcium overload during stress. Acts as a dominant-negative regulator that displaces MCU from the functional uniplex complex and thereby decreases the association of calcium sensors MICU1 and MICU2, preventing channel gating. Mitochondrial calcium homeostasis plays key roles in mitochondrial metabolism. Acts as an important regulator of mitochondrial metabolism in response to stress in muscle cells: induced in response to fasting, leading to restrict mitochondrial calcium uptake, resulting in reprogramming of mitochondria toward fatty acid oxidation preference. Acts as a regulator of macrophage polarization during skeletal muscle regeneration: inhibition of mitochondrial calcium uptake drives differentiation of macrophages with anti-inflammatory profile, promoting the differentiation and fusion of satellite cells. The chain is Calcium uniporter regulatory subunit MCUb, mitochondrial from Mus musculus (Mouse).